A 315-amino-acid polypeptide reads, in one-letter code: DNA-directed RNA polymerase subunit alpha (315 aa).

The tract at residues 1 to 228 (MLEIEKPKIE…EHFKLFMTLT (228 aa)) is alpha N-terminal domain (alpha-NTD). Residues 245–315 (KEKVLEMTIE…LGLSLKLNDE (71 aa)) are alpha C-terminal domain (alpha-CTD).

The protein belongs to the RNA polymerase alpha chain family. Homodimer. The RNAP catalytic core consists of 2 alpha, 1 beta, 1 beta' and 1 omega subunit. When a sigma factor is associated with the core the holoenzyme is formed, which can initiate transcription.

It carries out the reaction RNA(n) + a ribonucleoside 5'-triphosphate = RNA(n+1) + diphosphate. Its function is as follows. DNA-dependent RNA polymerase catalyzes the transcription of DNA into RNA using the four ribonucleoside triphosphates as substrates. This Clostridium acetobutylicum (strain ATCC 824 / DSM 792 / JCM 1419 / IAM 19013 / LMG 5710 / NBRC 13948 / NRRL B-527 / VKM B-1787 / 2291 / W) protein is DNA-directed RNA polymerase subunit alpha.